A 196-amino-acid chain; its full sequence is MAASVFCCLRCCRDGGTGHIPLKEMPAVQLDTQHMGTDVVIVKNGRRICGTGGCLASAPLHQNKSYFEFKIQSTGIWGIGVATQKVNLNQIPLGRDVHSLVMRNDGALYHNNEEKNRLPANSLPQEGDVVGITYDHVELNVYLNGKNMHCPASGIRGTVYPVVYVDDSAILDCQFSEFYHTPPPGFEKILFEQQIF.

The residue at position 2 (A2) is an N-acetylalanine. The B30.2/SPRY domain maps to 2 to 184 (AASVFCCLRC…FSEFYHTPPP (183 aa)).

The polypeptide is SPRY domain-containing protein 7 (SPRYD7) (Bos taurus (Bovine)).